The following is a 204-amino-acid chain: Movement protein TGB2 (204 aa).

Residues Met-1–Lys-11 lie on the Cytoplasmic side of the membrane. Residues Tyr-12–Asn-32 traverse the membrane as a helical segment. The Lumenal segment spans residues Gln-33–Ala-72. A helical membrane pass occupies residues Ser-73–Trp-93. Over Arg-94–Ser-204 the chain is Cytoplasmic.

It belongs to the virgaviridae/benyvirus TGB2 movement protein family. Interacts with movement protein TGB3. TGB1-TGB3-TGB2 complex formation is enhanced by ATP hydrolysis.

It localises to the host cell junction. It is found in the host plasmodesma. The protein localises to the host endoplasmic reticulum membrane. The protein resides in the host cytoplasm. Its subcellular location is the host cytoskeleton. In terms of biological role, participates in the transport of viral genome to neighboring plant cells directly through plasmodesmata, without any budding. TGBp2 and TGBp3 are necessary for intracellular delivery of TGBp1-containing vRNPs to plasmodesmata. Can gate plasmodesmata and increase their size exclusion limit. To a lesser extent than TGB3, induces host actin cytoskeleton network thickening, which probably plays a major role in virus cell-to-cell movement. The polypeptide is Movement protein TGB2 (Barley stripe mosaic virus (BSMV)).